A 61-amino-acid polypeptide reads, in one-letter code: Metallothionein-1A (61 aa).

M1 carries the post-translational modification N-acetylmethionine. The segment at M1 to C29 is beta. Residues C5, C7, C13, C15, C19, C21, C24, C26, C29, C33, C34, C36, C37, C41, C44, C48, C50, and C57 each coordinate a divalent metal cation. An alpha region spans residues K30–A61. S58 bears the Phosphoserine mark. 2 residues coordinate a divalent metal cation: C59 and C60.

The protein belongs to the metallothionein superfamily. Type 1 family. Monomer.

Its function is as follows. Metallothioneins have a high content of cysteine residues that bind various heavy metals; these proteins are transcriptionally regulated by both heavy metals and glucocorticoids. In Bos taurus (Bovine), this protein is Metallothionein-1A (MT1A).